The sequence spans 128 residues: Large ribosomal subunit protein bL12 (128 aa).

It belongs to the bacterial ribosomal protein bL12 family. As to quaternary structure, homodimer. Part of the ribosomal stalk of the 50S ribosomal subunit. Forms a multimeric L10(L12)X complex, where L10 forms an elongated spine to which 2 to 4 L12 dimers bind in a sequential fashion. Binds GTP-bound translation factors.

Forms part of the ribosomal stalk which helps the ribosome interact with GTP-bound translation factors. Is thus essential for accurate translation. The protein is Large ribosomal subunit protein bL12 of Saccharopolyspora erythraea (strain ATCC 11635 / DSM 40517 / JCM 4748 / NBRC 13426 / NCIMB 8594 / NRRL 2338).